An 85-amino-acid chain; its full sequence is U4-theraphotoxin-Hhn1r (85 aa).

The signal sequence occupies residues 1–22 (MKVTLIAILTCAAVLVLHTTAA). The propeptide occupies 23–48 (EELEAESQLMEVGMPDTELAAVDEER). Intrachain disulfides connect cysteine 52–cysteine 66, cysteine 56–cysteine 77, and cysteine 71–cysteine 82.

The protein belongs to the neurotoxin 12 (Hwtx-2) family. 02 (Hwtx-2) subfamily. Expressed by the venom gland.

Its subcellular location is the secreted. Functionally, postsynaptic neurotoxin. The polypeptide is U4-theraphotoxin-Hhn1r (Cyriopagopus hainanus (Chinese bird spider)).